Reading from the N-terminus, the 304-residue chain is Putative S-adenosyl-L-methionine-dependent methyltransferase MAV_4444 (304 aa).

Residues aspartate 130 and 159–160 (DL) contribute to the S-adenosyl-L-methionine site.

Belongs to the UPF0677 family.

Its function is as follows. Exhibits S-adenosyl-L-methionine-dependent methyltransferase activity. The protein is Putative S-adenosyl-L-methionine-dependent methyltransferase MAV_4444 of Mycobacterium avium (strain 104).